We begin with the raw amino-acid sequence, 433 residues long: tRNA-2-methylthio-N(6)-dimethylallyladenosine synthase (433 aa).

An MTTase N-terminal domain is found at 4–119; sequence KKLFIQTLGC…ITQAIKTPKF (116 aa). 6 residues coordinate [4Fe-4S] cluster: Cys-13, Cys-50, Cys-82, Cys-151, Cys-155, and Cys-158. One can recognise a Radical SAM core domain in the interval 137–370; that stretch reads RNSIYKSYIN…QNRHSEILDE (234 aa). One can recognise a TRAM domain in the interval 373-433; that stretch reads KKQENKTFKV…KRMVLYGEIV (61 aa).

It belongs to the methylthiotransferase family. MiaB subfamily. In terms of assembly, monomer. [4Fe-4S] cluster serves as cofactor.

The protein localises to the cytoplasm. It catalyses the reaction N(6)-dimethylallyladenosine(37) in tRNA + (sulfur carrier)-SH + AH2 + 2 S-adenosyl-L-methionine = 2-methylsulfanyl-N(6)-dimethylallyladenosine(37) in tRNA + (sulfur carrier)-H + 5'-deoxyadenosine + L-methionine + A + S-adenosyl-L-homocysteine + 2 H(+). Its function is as follows. Catalyzes the methylthiolation of N6-(dimethylallyl)adenosine (i(6)A), leading to the formation of 2-methylthio-N6-(dimethylallyl)adenosine (ms(2)i(6)A) at position 37 in tRNAs that read codons beginning with uridine. The polypeptide is tRNA-2-methylthio-N(6)-dimethylallyladenosine synthase (Campylobacter jejuni (strain RM1221)).